The chain runs to 400 residues: Enoyl-[acyl-carrier-protein] reductase [NADH] (400 aa).

NAD(+) is bound by residues 48–53, 74–75, 111–112, and 139–140; these read GASTGY, FE, DA, and LA. Tyr-225 serves as a coordination point for substrate. The active-site Proton donor is the Tyr-235. Residues Lys-244 and 273–275 contribute to the NAD(+) site; that span reads VVT.

It belongs to the TER reductase family. As to quaternary structure, monomer.

The catalysed reaction is a 2,3-saturated acyl-[ACP] + NAD(+) = a (2E)-enoyl-[ACP] + NADH + H(+). Its pathway is lipid metabolism; fatty acid biosynthesis. In terms of biological role, involved in the final reduction of the elongation cycle of fatty acid synthesis (FAS II). Catalyzes the reduction of a carbon-carbon double bond in an enoyl moiety that is covalently linked to an acyl carrier protein (ACP). This is Enoyl-[acyl-carrier-protein] reductase [NADH] from Burkholderia lata (strain ATCC 17760 / DSM 23089 / LMG 22485 / NCIMB 9086 / R18194 / 383).